The sequence spans 225 residues: 2-C-methyl-D-erythritol 4-phosphate cytidylyltransferase (225 aa).

This sequence belongs to the IspD/TarI cytidylyltransferase family. IspD subfamily.

The enzyme catalyses 2-C-methyl-D-erythritol 4-phosphate + CTP + H(+) = 4-CDP-2-C-methyl-D-erythritol + diphosphate. Its pathway is isoprenoid biosynthesis; isopentenyl diphosphate biosynthesis via DXP pathway; isopentenyl diphosphate from 1-deoxy-D-xylulose 5-phosphate: step 2/6. Functionally, catalyzes the formation of 4-diphosphocytidyl-2-C-methyl-D-erythritol from CTP and 2-C-methyl-D-erythritol 4-phosphate (MEP). The polypeptide is 2-C-methyl-D-erythritol 4-phosphate cytidylyltransferase (Prochlorococcus marinus (strain NATL2A)).